The chain runs to 272 residues: 3-methyl-2-oxobutanoate hydroxymethyltransferase (272 aa).

Mg(2+)-binding residues include Asp-42 and Asp-86. 3-methyl-2-oxobutanoate is bound by residues 42 to 43 (DS), Asp-86, and Lys-116. Mg(2+) is bound at residue Glu-118. Glu-185 acts as the Proton acceptor in catalysis.

This sequence belongs to the PanB family. In terms of assembly, homodecamer; pentamer of dimers. Requires Mg(2+) as cofactor.

It localises to the cytoplasm. The enzyme catalyses 3-methyl-2-oxobutanoate + (6R)-5,10-methylene-5,6,7,8-tetrahydrofolate + H2O = 2-dehydropantoate + (6S)-5,6,7,8-tetrahydrofolate. It functions in the pathway cofactor biosynthesis; (R)-pantothenate biosynthesis; (R)-pantoate from 3-methyl-2-oxobutanoate: step 1/2. In terms of biological role, catalyzes the reversible reaction in which hydroxymethyl group from 5,10-methylenetetrahydrofolate is transferred onto alpha-ketoisovalerate to form ketopantoate. The protein is 3-methyl-2-oxobutanoate hydroxymethyltransferase of Prochlorococcus marinus (strain NATL1A).